The following is a 930-amino-acid chain: Endoplasmic reticulum aminopeptidase 1 (930 aa).

The Cytoplasmic segment spans residues 1-2; sequence MP. A helical; Signal-anchor for type II membrane protein membrane pass occupies residues 3–23; the sequence is SLLSLVLTFLAVSSPSCCQNS. Residues 24 to 930 lie on the Lumenal side of the membrane; sequence DTASPKASNG…WLQKERQELL (907 aa). Residues Asn-59 and Asn-143 are each glycosylated (N-linked (GlcNAc...) asparagine). Substrate contacts are provided by residues Glu-172 and 306 to 310; that span reads GAMEN. His-342 contacts Zn(2+). Glu-343 (proton acceptor) is an active-site residue. The Zn(2+) site is built by His-346 and Glu-365. The cysteines at positions 393 and 432 are disulfide-linked. 2 N-linked (GlcNAc...) asparagine glycosylation sites follow: Asn-403 and Asn-655. A disulfide bridge connects residues Cys-725 and Cys-732. Asn-749 and Asn-890 each carry an N-linked (GlcNAc...) asparagine glycan.

This sequence belongs to the peptidase M1 family. Monomer. May also exist as a heterodimer; with ERAP2. Interacts with RBMX. Zn(2+) serves as cofactor. N-glycosylated. As to expression, ubiquitous.

It localises to the endoplasmic reticulum membrane. Its function is as follows. Aminopeptidase that plays a central role in peptide trimming, a step required for the generation of most HLA class I-binding peptides. Peptide trimming is essential to customize longer precursor peptides to fit them to the correct length required for presentation on MHC class I molecules. Strongly prefers substrates 9-16 residues long. Rapidly degrades 13-mer to a 9-mer and then stops. Preferentially hydrolyzes the residue Leu and peptides with a hydrophobic C-terminus, while it has weak activity toward peptides with charged C-terminus. May play a role in the inactivation of peptide hormones. May be involved in the regulation of blood pressure through the inactivation of angiotensin II and/or the generation of bradykinin in the kidney. The sequence is that of Endoplasmic reticulum aminopeptidase 1 (Erap1) from Rattus norvegicus (Rat).